Reading from the N-terminus, the 159-residue chain is Ribosomal RNA large subunit methyltransferase H (159 aa).

Residues Leu-76, Gly-108, and 127–132 (FSKMTL) each bind S-adenosyl-L-methionine.

It belongs to the RNA methyltransferase RlmH family. As to quaternary structure, homodimer.

Its subcellular location is the cytoplasm. It catalyses the reaction pseudouridine(1915) in 23S rRNA + S-adenosyl-L-methionine = N(3)-methylpseudouridine(1915) in 23S rRNA + S-adenosyl-L-homocysteine + H(+). In terms of biological role, specifically methylates the pseudouridine at position 1915 (m3Psi1915) in 23S rRNA. The chain is Ribosomal RNA large subunit methyltransferase H from Bacillus mycoides (strain KBAB4) (Bacillus weihenstephanensis).